The following is a 236-amino-acid chain: 2,3,4,5-tetrahydropyridine-2,6-dicarboxylate N-acetyltransferase (236 aa).

Belongs to the transferase hexapeptide repeat family. DapH subfamily.

The enzyme catalyses (S)-2,3,4,5-tetrahydrodipicolinate + acetyl-CoA + H2O = L-2-acetamido-6-oxoheptanedioate + CoA. It functions in the pathway amino-acid biosynthesis; L-lysine biosynthesis via DAP pathway; LL-2,6-diaminopimelate from (S)-tetrahydrodipicolinate (acetylase route): step 1/3. Functionally, catalyzes the transfer of an acetyl group from acetyl-CoA to tetrahydrodipicolinate. The polypeptide is 2,3,4,5-tetrahydropyridine-2,6-dicarboxylate N-acetyltransferase (Thermotoga maritima (strain ATCC 43589 / DSM 3109 / JCM 10099 / NBRC 100826 / MSB8)).